Reading from the N-terminus, the 162-residue chain is Transcriptional regulator MraZ (162 aa).

2 SpoVT-AbrB domains span residues 11 to 62 and 98 to 141; these read EHPS…GLSV and AVEC…SRDT.

Belongs to the MraZ family. As to quaternary structure, forms oligomers.

Its subcellular location is the cytoplasm. The protein resides in the nucleoid. The polypeptide is Transcriptional regulator MraZ (Pelobacter propionicus (strain DSM 2379 / NBRC 103807 / OttBd1)).